Consider the following 345-residue polypeptide: Arginase (345 aa).

A compositionally biased stretch (basic and acidic residues) spans 1–16 (MKETAAAKFERQHMDS). The interval 1-34 (MKETAAAKFERQHMDSPDLGTDDDDKMSPATSPF) is disordered. 6 residues coordinate Mn(2+): I101, H124, S126, G128, I232, and C234.

This sequence belongs to the arginase family. Homotrimer. Requires Mn(2+) as cofactor.

It carries out the reaction L-arginine + H2O = urea + L-ornithine. Its pathway is nitrogen metabolism; urea cycle; L-ornithine and urea from L-arginine: step 1/1. With respect to regulation, the enzyme activity is increased in the range of 20-50% upon the addition of Mn(2+) (1 mM), Co(2+) (1 mM), Ni(2+) (1 and 5 mM) and K(+) (5 mM). In contrast, the addition of Cu(2+), Zn(2+), Ca(2+), Mg(2+), Fe(2+) (both 1 and 5 mM), and Co(2+) (5 mM) strongly suppresses the arginase activity. SDS (1%) and EDTA (1 mM) are the most potent inhibitors. Reducing agents DTT (1 mM), PMSF (1 mM) and beta-mercaptoethanol (1 mM) also significantly inhibit activity by 85%, 64% and 35%, respectively. Surfactants Triton X-100 (1%), Tween-80 (1%) and Tween-20 (1%) are more tolerant, showing a slight decrease of arginase activity in the range of 10-30%. In terms of biological role, cold-active L-arginase that catalyzes the hydrolysis of L-arginine to L-ornithine and urea, an essential reaction in the urea cycle for toxic ammonia removal and cell proliferation. Is not able to use D-arginine or L-canavanine as substrates. This is Arginase from Glaciozyma antarctica (strain PI12) (Antarctic psychrophilic yeast).